We begin with the raw amino-acid sequence, 979 residues long: Putative cellulose synthase-like protein D6 (979 aa).

The tract at residues 1–24 (MMDGESPLRHPRISHVSNSGSDFG) is disordered. Over residues 14 to 24 (SHVSNSGSDFG) the composition is skewed to low complexity. 2 consecutive transmembrane segments (helical) span residues 116-136 (IIIA…ALFL) and 147-167 (ALWL…SWLL). Active-site residues include aspartate 247 and aspartate 683. 6 consecutive transmembrane segments (helical) span residues 765-785 (IFIL…HFVV), 788-808 (LTGS…GLAV), 837-857 (LVAV…SFTL), 882-902 (ALMI…LFAV), 913-933 (WSNL…MYPF), and 946-966 (TVVY…YITI).

This sequence belongs to the glycosyltransferase 2 family. Plant cellulose synthase-like D subfamily.

It localises to the golgi apparatus membrane. Thought to be a Golgi-localized beta-glycan synthase that polymerize the backbones of noncellulosic polysaccharides (hemicelluloses) of plant cell wall. This chain is Putative cellulose synthase-like protein D6 (CSLD6), found in Arabidopsis thaliana (Mouse-ear cress).